A 511-amino-acid polypeptide reads, in one-letter code: Lysine--tRNA ligase (511 aa).

E421 and E428 together coordinate Mg(2+).

The protein belongs to the class-II aminoacyl-tRNA synthetase family. In terms of assembly, homodimer. It depends on Mg(2+) as a cofactor.

It is found in the cytoplasm. The enzyme catalyses tRNA(Lys) + L-lysine + ATP = L-lysyl-tRNA(Lys) + AMP + diphosphate. The polypeptide is Lysine--tRNA ligase (Herminiimonas arsenicoxydans).